A 154-amino-acid chain; its full sequence is Large ribosomal subunit protein uL24 (154 aa).

The tract at residues 97-154 (EIAARKNLPPPEVPEETSNDTKESDENVTGADKEETNEIKEEDLNDNEDKNNDGSQEA) is disordered. Basic and acidic residues predominate over residues 115–135 (NDTKESDENVTGADKEETNEI).

This sequence belongs to the universal ribosomal protein uL24 family. Part of the 50S ribosomal subunit.

In terms of biological role, one of two assembly initiator proteins, it binds directly to the 5'-end of the 23S rRNA, where it nucleates assembly of the 50S subunit. Located at the polypeptide exit tunnel on the outside of the subunit. In Picrophilus torridus (strain ATCC 700027 / DSM 9790 / JCM 10055 / NBRC 100828 / KAW 2/3), this protein is Large ribosomal subunit protein uL24.